A 468-amino-acid polypeptide reads, in one-letter code: Glutamate--tRNA ligase (468 aa).

Positions 8–18 (PSPTGDPHVGT) match the 'HIGH' region motif. The short motif at 243 to 247 (KISKR) is the 'KMSKS' region element. Position 246 (Lys246) interacts with ATP.

This sequence belongs to the class-I aminoacyl-tRNA synthetase family. Glutamate--tRNA ligase type 1 subfamily. In terms of assembly, monomer.

Its subcellular location is the cytoplasm. The catalysed reaction is tRNA(Glu) + L-glutamate + ATP = L-glutamyl-tRNA(Glu) + AMP + diphosphate. Its function is as follows. Catalyzes the attachment of glutamate to tRNA(Glu) in a two-step reaction: glutamate is first activated by ATP to form Glu-AMP and then transferred to the acceptor end of tRNA(Glu). The polypeptide is Glutamate--tRNA ligase (Thermus thermophilus (strain ATCC BAA-163 / DSM 7039 / HB27)).